The chain runs to 827 residues: ADP-ribosylation factor GTPase-activating protein AGD3 (827 aa).

Residues 1-225 (MHFTKLDDSP…INQVLTYAQQ (225 aa)) form the BAR domain. 2 coiled-coil regions span residues 116–139 (HEVK…REKF) and 223–253 (AQQS…RESR). The interval 246-269 (RQVDRESRWGSNGSNGSPNGDGIQ) is disordered. The span at 255 to 267 (GSNGSNGSPNGDG) shows a compositional bias: low complexity. Residues 292-430 (QTIRQGYLSK…WIEKITGVIA (139 aa)) form the PH domain. The tract at residues 439-467 (EQRLPGSPMGSGHHRSASESSSYESSEYD) is disordered. Residue Ser445 is modified to Phosphoserine. Positions 501-643 (EKPIDALRKV…LFVRRSRDSD (143 aa)) constitute an Arf-GAP domain. A C4-type zinc finger spans residues 516–539 (CADCGAPEPDWASLNLGVLVCIEC). ANK repeat units lie at residues 728–757 (GGSS…NVNA), 761–790 (SGQT…DPEA), and 794–825 (EGKT…YNHR).

In terms of assembly, homodimer. Interacts with DRP1A. Interacts with VAB. In terms of tissue distribution, broadly expressed. Detected in developing veins of the leaf and root. Detected in roots, hypocotyls, cotyledons, leaves, siliques and shoot apical meristems.

It localises to the golgi apparatus. The protein resides in the trans-Golgi network. ARF GAP activity strongly enhanced by phosphatidylinositol 4-monophosphate (PIP) and moderately enhanced by phosphatidylinositol 4,5-bisphosphate (PIP2). GTPase-activating protein (GAP) for ADP ribosylation factor (ARF). Involved in the spatial control of provascular differentiation. Required for the formation of the normal pattern of continuous secondary veins. Involved in auxin signaling but not in polar auxin transport or in auxin responses. Required for PIN1 internalization in roots. The protein is ADP-ribosylation factor GTPase-activating protein AGD3 (AGD3) of Arabidopsis thaliana (Mouse-ear cress).